The chain runs to 569 residues: Aspartic proteinase 3 (569 aa).

Residues 1–21 (MKLKTVRSAVLSSLFASQVLG) form the signal peptide. The propeptide occupies 22–67 (KIIPAANKRDDDSNSKFVKLPFHKLYGDSLENVGSDKKPEVRLLKR). One can recognise a Peptidase A1 domain in the interval 83–475 (YSVDLEVGTP…DLENLEISMA (393 aa)). N95 carries an N-linked (GlcNAc...) asparagine glycan. Residue D101 is part of the active site. N-linked (GlcNAc...) asparagine glycosylation is found at N203, N232, N242, N245, N299, and N358. The active site involves D371. Residues N480, N522, and N532 are each glycosylated (N-linked (GlcNAc...) asparagine). N548 carries the GPI-anchor amidated asparagine lipid modification. Positions 549–569 (VGDHIVPSLPLTLISLLFAFI) are cleaved as a propeptide — removed in mature form.

Belongs to the peptidase A1 family. As to quaternary structure, consists of an alpha and a beta subunit, which are maintained together by a disulfide bond. Post-translationally, the zymogen is transported to the periplasm, where the propeptide is removed and the enzyme is further subjected to an internal, autocatalytic cleavage to generate an alpha/beta two-subunit endopeptidase. The proteolytic processing at the cell surface is regulated by the environmental pH. Extensively N-glycosylated.

It is found in the cell membrane. The enzyme catalyses Hydrolyzes various precursor proteins with Arg or Lys in P1, and commonly Arg or Lys also in P2. The P3 amino acid is usually non-polar, but otherwise additional basic amino acids are favorable in both non-prime and prime positions.. In terms of biological role, cleaves proteins C-terminally to mono- and paired-basic residues. Involved in the shedding of a subset of GPI-anchored plasma membrane proteins from the cell surface, including itself, GAS1 and MSB2. May also play a role in the maturation of GPI-mannoproteins associated with the cell wall. Can process the alpha-mating factor precursor. Required for cell wall integrity. The protein is Aspartic proteinase 3 (YPS1) of Saccharomyces cerevisiae (strain ATCC 204508 / S288c) (Baker's yeast).